We begin with the raw amino-acid sequence, 478 residues long: Cysteine protease ATG4B (478 aa).

A compositionally biased stretch (polar residues) spans 1-15; the sequence is MTSLPDRGVSSSSSD. Residues 1–31 are disordered; sequence MTSLPDRGVSSSSSDPLCEGNIAPCSSSSEQ. The active-site Nucleophile is the cysteine 164. Residues aspartate 361 and histidine 363 contribute to the active site.

It belongs to the peptidase C54 family. In terms of assembly, interacts with ATG8.

It localises to the cytoplasm. The catalysed reaction is [protein]-C-terminal L-amino acid-glycyl-phosphatidylethanolamide + H2O = [protein]-C-terminal L-amino acid-glycine + a 1,2-diacyl-sn-glycero-3-phosphoethanolamine. Its function is as follows. Cysteine protease that plays a key role in autophagy by mediating both proteolytic activation and delipidation of ATG8 family proteins. The protease activity is required for proteolytic activation of ATG8 family proteins: cleaves the C-terminal amino acid of ATG8 proteins to reveal a C-terminal glycine. Exposure of the glycine at the C-terminus is essential for ATG8 proteins conjugation to phosphatidylethanolamine (PE) and insertion to membranes, which is necessary for autophagy. In addition to the protease activity, also mediates delipidation of PE-conjugated ATG8 proteins. In Oryza sativa subsp. japonica (Rice), this protein is Cysteine protease ATG4B (ATG4B).